The following is a 449-amino-acid chain: Nucleoprotein (449 aa).

The interval 1-55 (MSFTPGKQSSSRASSGNRSGNGILKWADQSDQSRNVQTRGRRVQSKQTATSQQPS) is disordered. Low complexity predominate over residues 9–22 (SSSRASSGNRSGNG). Composition is skewed to polar residues over residues 29-38 (QSDQSRNVQT) and 45-55 (SKQTATSQQPS). Positions 52–194 (QQPSGGTVVP…GYYIEGSGRS (143 aa)) are RNA-binding. The region spanning 61–190 (PYYSWFSGIT…VLPQGYYIEG (130 aa)) is the CoV N NTD domain. Positions 106, 122, and 164 each coordinate RNA. Disordered regions lie at residues 158–231 (PADI…VTPD), 266–297 (ILNKPRQKRSPNKQCTVQQCFGKRGPNQNFGG), and 387–449 (MMNI…TSEI). Serine 167 is subject to Phosphoserine; by host. A Phosphothreonine; by host modification is found at threonine 174. Serine 191 carries the phosphoserine; by host modification. 2 stretches are compositionally biased toward polar residues: residues 194–204 (SAPNSRSTSRA) and 212–227 (GSRSRANSGNRTSTPG). Positions 259–384 (AKEVRQKILN…QNLNAYQHQE (126 aa)) constitute a CoV N CTD domain. Positions 266 to 276 (ILNKPRQKRSP) are enriched in basic residues. The dimerization stretch occupies residues 266–385 (ILNKPRQKRS…NLNAYQHQED (120 aa)). The residue at position 391 (serine 391) is a Phosphoserine; by host. The segment covering 400-410 (QKNGQVENDNV) has biased composition (polar residues). The segment covering 423 to 440 (KSRELTAEDISLLKKMDE) has biased composition (basic and acidic residues). Serine 424 is modified (phosphoserine; by host). Threonine 428 carries the phosphothreonine; by host modification.

This sequence belongs to the betacoronavirus nucleocapsid protein family. Homooligomer. Both monomeric and oligomeric forms interact with RNA. Interacts with protein M. Interacts with NSP3; this interaction serves to tether the genome to the newly translated replicase-transcriptase complex at a very early stage of infection. Post-translationally, ADP-ribosylated. The ADP-ribosylation is retained in the virion during infection. Phosphorylated on serine and threonine residues.

Its subcellular location is the virion. The protein resides in the host endoplasmic reticulum-Golgi intermediate compartment. It localises to the host Golgi apparatus. Packages the positive strand viral genome RNA into a helical ribonucleocapsid (RNP) and plays a fundamental role during virion assembly through its interactions with the viral genome and membrane protein M. Plays an important role in enhancing the efficiency of subgenomic viral RNA transcription as well as viral replication. The protein is Nucleoprotein of Sus scrofa (Pig).